A 205-amino-acid chain; its full sequence is Small ribosomal subunit protein uS4 (205 aa).

The segment covering 1–16 (MSKRESSKYKIDRRMG) has biased composition (basic and acidic residues). The interval 1–46 (MSKRESSKYKIDRRMGENIWGRPKSPVNRREYGPGQHGQRRKGKLS) is disordered. The 64-residue stretch at 94 to 157 (SRLDAIVYRA…KQLVIVLEAV (64 aa)) folds into the S4 RNA-binding domain.

The protein belongs to the universal ribosomal protein uS4 family. In terms of assembly, part of the 30S ribosomal subunit. Contacts protein S5. The interaction surface between S4 and S5 is involved in control of translational fidelity.

One of the primary rRNA binding proteins, it binds directly to 16S rRNA where it nucleates assembly of the body of the 30S subunit. Functionally, with S5 and S12 plays an important role in translational accuracy. In Rhizobium leguminosarum bv. trifolii (strain WSM2304), this protein is Small ribosomal subunit protein uS4.